Reading from the N-terminus, the 144-residue chain is MAAYLLAVAILFCIQGWPSGTVQGQVRPFLDVYERSACQTRETLVSILQEHPDEISDIFRPSCVAVLRCSGCCTDESMKCTPVGKHTADIQIMRMNPRTHSSKMEVMKFMEHTACECRPRWKQGEPEGPKEPRRGGVRAKFPFD.

Residues 1–24 (MAAYLLAVAILFCIQGWPSGTVQG) form the signal peptide. Gln25 is modified (pyrrolidone carboxylic acid). Cystine bridges form between Cys38/Cys80, Cys69/Cys115, and Cys73/Cys117. A compositionally biased stretch (basic and acidic residues) spans 120-134 (RWKQGEPEGPKEPRR). The segment at 120 to 144 (RWKQGEPEGPKEPRRGGVRAKFPFD) is disordered. The propeptide occupies 134–144 (RGGVRAKFPFD).

Belongs to the PDGF/VEGF growth factor family. Snake venom VEGF subfamily. As to quaternary structure, homodimer; disulfide-linked. Interacts with VEGF receptor-2 (KDR) with high affinity, but not with VEGF receptor-1 (Flt-1), VEGF receptor-3 (FLT4), and neuropilin-1 (NRP1). As to expression, expressed by the venom gland.

The protein localises to the secreted. Functionally, snake venom VEGFs may contribute to venom dispersion and prey subjugation by inducing vascular permeability and hypotension. This protein induces angiogenesis probably through VEGF receptor (KDR/VEGFR-2) signaling, as well as drastic hypotension. The hypotension is mediated by nitric oxide, which is produced by VEGF-activated endothelium NO synthase. May also induce vascular permeability. This is Snake venom vascular endothelial growth factor toxin VR-1 from Daboia russelii (Russel's viper).